The primary structure comprises 217 residues: Dephospho-CoA kinase (217 aa).

The 200-residue stretch at 4-203 (IVALTGGISS…SHLSRIYNKN (200 aa)) folds into the DPCK domain. 12-17 (SSGKTT) contributes to the ATP binding site.

This sequence belongs to the CoaE family.

The protein localises to the cytoplasm. It carries out the reaction 3'-dephospho-CoA + ATP = ADP + CoA + H(+). It participates in cofactor biosynthesis; coenzyme A biosynthesis; CoA from (R)-pantothenate: step 5/5. Catalyzes the phosphorylation of the 3'-hydroxyl group of dephosphocoenzyme A to form coenzyme A. The protein is Dephospho-CoA kinase of Buchnera aphidicola subsp. Acyrthosiphon pisum (strain APS) (Acyrthosiphon pisum symbiotic bacterium).